The sequence spans 176 residues: Disulfide bond formation protein B (176 aa).

Residues 1–11 are Cytoplasmic-facing; that stretch reads MLQLTTYRNLQ. Residues 12–28 form a helical membrane-spanning segment; the sequence is VFLVIMTAIGMSFALFF. The Periplasmic segment spans residues 29–46; that stretch reads LQRYMGFSPCPLCIFQRI. Cys38 and Cys41 are disulfide-bonded. Residues 47 to 63 traverse the membrane as a helical segment; sequence GLMIMGGFALIAALFHP. The Cytoplasmic segment spans residues 64–70; that stretch reads KSMVIRL. A helical membrane pass occupies residues 71–88; it reads LLWLGSLAGIGWAAIVAG. Residues 89–145 lie on the Periplasmic side of the membrane; the sequence is RHVWLQHLPADQVPSCGPGLDYWLDTLPMQQVLKEVFAGSGECASIEWTFLGLSIPE. Cys104 and Cys131 are oxidised to a cystine. A helical transmembrane segment spans residues 146 to 164; the sequence is QSLILFSILILTHLLILWR. Topologically, residues 165 to 176 are cytoplasmic; that stretch reads IVRPSTPKPLAR.

Belongs to the DsbB family.

The protein resides in the cell inner membrane. Its function is as follows. Required for disulfide bond formation in some periplasmic proteins. Acts by oxidizing the DsbA protein. The sequence is that of Disulfide bond formation protein B from Psychrobacter arcticus (strain DSM 17307 / VKM B-2377 / 273-4).